We begin with the raw amino-acid sequence, 465 residues long: MGKTLYHKLYNSHIVYEQNNVTSILYIDLHLIHEVTXPQAFNSLRLKNRKIRQPKKTFATMDHNVPTHNRDIKNSEYMAKIQMEELSKNCKDFNIKLYDINHPHQGIVHVLGPEKGMTLPGMVIVCGDSHTSTHGAFGALAFGIGTSEVEHVLATQTLQQNRLKTMNIEITGNINPMVFAKDIILSIIRKLSTSGGIGYVIEFSGSVISQLSMESRMTICNMSIEMGAKSGLIAPDIITYNYLKNKSYSPKNKYWNNAINYWNTLKSDKNAFFDKKISINISNLAPQITWGTKPDQVISIDEPIPNIDSLKMFLNKNQLKNPLLYMGLKPGEYLNNLVVDKVFIGSCTNSRTEDLRAAANIVQNTHVAKNVHAIVVPGSGMVKLQAEEEGLDKIFINAGFEWRLPGCSMCLGMNLDRLKPKERCASTSNRNFEGRQGRDGRTHLVSPAMAAAAAIFGHFVDIRKI.

Residues Cys-347, Cys-407, and Cys-410 each coordinate [4Fe-4S] cluster.

Belongs to the aconitase/IPM isomerase family. LeuC type 1 subfamily. As to quaternary structure, heterodimer of LeuC and LeuD. It depends on [4Fe-4S] cluster as a cofactor.

It catalyses the reaction (2R,3S)-3-isopropylmalate = (2S)-2-isopropylmalate. It functions in the pathway amino-acid biosynthesis; L-leucine biosynthesis; L-leucine from 3-methyl-2-oxobutanoate: step 2/4. Functionally, catalyzes the isomerization between 2-isopropylmalate and 3-isopropylmalate, via the formation of 2-isopropylmaleate. This chain is 3-isopropylmalate dehydratase large subunit, found in Buchnera aphidicola subsp. Pemphigus spyrothecae.